Here is a 200-residue protein sequence, read N- to C-terminus: CASP-like protein 1D2 (200 aa).

A disordered region spans residues 1–26 (MASTENPDPETGKSEPIPASATTPPP). Topologically, residues 1 to 36 (MASTENPDPETGKSEPIPASATTPPPSAASFLDCRK) are cytoplasmic. Residues 37–57 (IDVIIRVLLFSATLTALIVMV) traverse the membrane as a helical segment. Over 58-85 (TSDQTEKTQLPGVSSPAPVSAEFNDSPA) the chain is Extracellular. Residues 86–106 (FIFFVVALVVTSFYALMSTLV) form a helical membrane-spanning segment. The Cytoplasmic segment spans residues 107–129 (SISLLLKPEFTARVSVYLASLDM). The helical transmembrane segment at 130 to 150 (VMLGILASATGTAGGVAYIAL) threads the bilayer. Residues 151-171 (KGNKEVGWNKICNVYDKFCRY) lie on the Extracellular side of the membrane. Residues 172–192 (IATSLALSLFATLLLLVLSIC) traverse the membrane as a helical segment. At 193–200 (SALSKRTP) the chain is on the cytoplasmic side.

The protein belongs to the Casparian strip membrane proteins (CASP) family. In terms of assembly, homodimer and heterodimers.

It is found in the cell membrane. This Arabidopsis lyrata subsp. lyrata (Lyre-leaved rock-cress) protein is CASP-like protein 1D2.